The primary structure comprises 63 residues: Large ribosomal subunit protein uL29 (63 aa).

Belongs to the universal ribosomal protein uL29 family.

The protein is Large ribosomal subunit protein uL29 of Klebsiella pneumoniae (strain 342).